The sequence spans 321 residues: Probable heme-iron transport system permease protein IsdF (321 aa).

Helical transmembrane passes span 9 to 29 (LLFL…FVTG), 61 to 81 (ILIA…LQAA), 89 to 109 (ANII…MLFI), 114 to 134 (FYLP…IILL), 143 to 163 (VSMI…LEIL), 179 to 199 (IWSD…LTLL), 233 to 253 (VFLA…GIIV), 267 to 287 (LIPF…LLGR), and 294 to 314 (EIPA…YLIC).

Belongs to the binding-protein-dependent transport system permease family. FecCD subfamily.

It is found in the cell membrane. Part of the binding-protein-dependent transport system for heme-iron. Responsible for the translocation of the substrate across the membrane. The sequence is that of Probable heme-iron transport system permease protein IsdF (isdF) from Staphylococcus aureus (strain NCTC 8325 / PS 47).